The chain runs to 149 residues: Thioredoxin-like protein 4B (149 aa).

It belongs to the DIM1 family. Homodimer. Interacts with the U5-102 kDa protein subunit of the spliceosome.

The protein resides in the nucleus. Functionally, essential role in pre-mRNA splicing. Required in cell cycle progression for S/G(2) transition. The chain is Thioredoxin-like protein 4B (TXNL4B) from Homo sapiens (Human).